Consider the following 906-residue polypeptide: Cadherin-2 (906 aa).

An N-terminal signal peptide occupies residues 1–25 (MCRIVGAPRTLLPLLAALLQASVDA). Positions 26-159 (SGEISLCKTG…HNGYLQRQKR (134 aa)) are excised as a propeptide. Phosphoserine occurs at positions 96 and 135. 5 Cadherin domains span residues 160 to 267 (DWVI…RPEF), 268 to 392 (LHQV…GEVP), 393 to 497 (ENRV…NPYF), 498 to 603 (APNP…DNAP), and 604 to 714 (QVLP…DVDR). The Extracellular segment spans residues 160–724 (DWVIPPINLP…IVGAGLGTGA (565 aa)). E170 serves as a coordination point for Ca(2+). The N-linked (GlcNAc...) asparagine glycan is linked to N190. Positions 226, 228, 259, 260, 261, 262, and 263 each coordinate Ca(2+). N273 carries N-linked (GlcNAc...) asparagine glycosylation. D293, D295, and N301 together coordinate Ca(2+). N-linked (GlcNAc...) asparagine glycosylation is present at N325. D353 contacts Ca(2+). N357, N402, N572, N622, N651, and N692 each carry an N-linked (GlcNAc...) asparagine glycan. The helical transmembrane segment at 725-746 (IIAILLCIIILLILVLMFVVWM) threads the bilayer. Over 747–906 (KRRDKERQAK…LADMYGGGDD (160 aa)) the chain is Cytoplasmic. A compositionally biased stretch (low complexity) spans 863–880 (SGSTAGSLSSLNSSSSGG). Residues 863–884 (SGSTAGSLSSLNSSSSGGEQDY) are disordered.

As to quaternary structure, homodimer (via extracellular region). Can also form heterodimers with other cadherins (via extracellular region). Dimerization occurs in trans, i.e. with a cadherin chain from another cell. Interacts with CDCP1. Interacts with PCDH8; this complex may also include TAOK2. The interaction with PCDH8 may lead to internalization through TAOK2/p38 MAPK pathway. Identified in a complex containing FGFR4, NCAM1, CDH2, PLCG1, FRS2, SRC, SHC1, GAP43 and CTTN. May interact with OBSCN (via protein kinase domain 2). Interacts with FBXO45. In terms of processing, cleaved by MMP24. Ectodomain cleavage leads to the generation of a soluble 90 kDa N-terminal soluble fragment and a 45 kDa membrane-bound C-terminal fragment 1 (CTF1), which is further cleaved by gamma-secretase into a 35 kDa. Cleavage in neural stem cells by MMP24 affects CDH2-mediated anchorage of neural stem cells to ependymocytes in the adult subependymal zone, leading to modulate neural stem cell quiescence. May be phosphorylated by OBSCN. Detected in liver, kidney, heart and brain capillaries.

The protein localises to the cell membrane. It is found in the sarcolemma. It localises to the cell junction. The protein resides in the cell surface. Its subcellular location is the desmosome. The protein localises to the adherens junction. Functionally, calcium-dependent cell adhesion protein; preferentially mediates homotypic cell-cell adhesion by dimerization with a CDH2 chain from another cell. Cadherins may thus contribute to the sorting of heterogeneous cell types. Acts as a regulator of neural stem cells quiescence by mediating anchorage of neural stem cells to ependymocytes in the adult subependymal zone: upon cleavage by MMP24, CDH2-mediated anchorage is affected, leading to modulate neural stem cell quiescence. Plays a role in cell-to-cell junction formation between pancreatic beta cells and neural crest stem (NCS) cells, promoting the formation of processes by NCS cells. Required for proper neurite branching. Required for pre- and postsynaptic organization. CDH2 may be involved in neuronal recognition mechanism. In hippocampal neurons, may regulate dendritic spine density. The sequence is that of Cadherin-2 (CDH2) from Bos taurus (Bovine).